Reading from the N-terminus, the 290-residue chain is 4-diphosphocytidyl-2-C-methyl-D-erythritol kinase (290 aa).

Lys-10 is an active-site residue. ATP is bound at residue 95–105 (PVAAGLAGGSS). Residue Asp-137 is part of the active site.

It belongs to the GHMP kinase family. IspE subfamily.

It carries out the reaction 4-CDP-2-C-methyl-D-erythritol + ATP = 4-CDP-2-C-methyl-D-erythritol 2-phosphate + ADP + H(+). It functions in the pathway isoprenoid biosynthesis; isopentenyl diphosphate biosynthesis via DXP pathway; isopentenyl diphosphate from 1-deoxy-D-xylulose 5-phosphate: step 3/6. Functionally, catalyzes the phosphorylation of the position 2 hydroxy group of 4-diphosphocytidyl-2C-methyl-D-erythritol. This is 4-diphosphocytidyl-2-C-methyl-D-erythritol kinase from Geobacillus thermodenitrificans (strain NG80-2).